The sequence spans 164 residues: Crossover junction endodeoxyribonuclease RuvC (164 aa).

Active-site residues include Asp7, Glu66, and Asp138. Positions 7, 66, and 138 each coordinate Mg(2+).

It belongs to the RuvC family. In terms of assembly, homodimer which binds Holliday junction (HJ) DNA. The HJ becomes 2-fold symmetrical on binding to RuvC with unstacked arms; it has a different conformation from HJ DNA in complex with RuvA. In the full resolvosome a probable DNA-RuvA(4)-RuvB(12)-RuvC(2) complex forms which resolves the HJ. The cofactor is Mg(2+).

Its subcellular location is the cytoplasm. The enzyme catalyses Endonucleolytic cleavage at a junction such as a reciprocal single-stranded crossover between two homologous DNA duplexes (Holliday junction).. The RuvA-RuvB-RuvC complex processes Holliday junction (HJ) DNA during genetic recombination and DNA repair. Endonuclease that resolves HJ intermediates. Cleaves cruciform DNA by making single-stranded nicks across the HJ at symmetrical positions within the homologous arms, yielding a 5'-phosphate and a 3'-hydroxyl group; requires a central core of homology in the junction. The consensus cleavage sequence is 5'-(A/T)TT(C/G)-3'. Cleavage occurs on the 3'-side of the TT dinucleotide at the point of strand exchange. HJ branch migration catalyzed by RuvA-RuvB allows RuvC to scan DNA until it finds its consensus sequence, where it cleaves and resolves the cruciform DNA. This is Crossover junction endodeoxyribonuclease RuvC from Paracoccus denitrificans (strain Pd 1222).